The chain runs to 66 residues: Phylloseptin-B1 (66 aa).

An N-terminal signal peptide occupies residues 1–22 (MAFLKKSLFLVLFLGLVSLSIC). A propeptide spanning residues 23–46 (EEEKRETEEKEYDQGEDDKSEEKR) is cleaved from the precursor. Leu65 carries the post-translational modification Leucine amide.

This sequence belongs to the frog skin active peptide (FSAP) family. Phylloseptin subfamily. As to expression, expressed by the skin glands.

The protein resides in the secreted. Its subcellular location is the target cell membrane. In terms of biological role, antimicrobial peptide with activity against only a few strains of Gram-positive bacteria (S.aureus and B.megaterium). Acts in a synergistic effect in combination with Plasticin-B1 at doses that are not active alone. The sequence is that of Phylloseptin-B1 from Phyllomedusa bicolor (Two-colored leaf frog).